Reading from the N-terminus, the 28-residue chain is Dermaseptin-H2 (28 aa).

Belongs to the frog skin active peptide (FSAP) family. Dermaseptin subfamily. As to expression, expressed by the skin glands.

Its subcellular location is the secreted. In terms of biological role, possesses a potent antimicrobial activity against Gram-positive and Gram-negative bacteria. Probably acts by disturbing membrane functions with its amphipathic structure. This is Dermaseptin-H2 from Pithecopus azureus (Orange-legged monkey tree frog).